The sequence spans 435 residues: Adenylosuccinate synthetase (435 aa).

GTP is bound by residues 11 to 17 and 39 to 41; these read GDEGKGK and GHT. Catalysis depends on aspartate 12, which acts as the Proton acceptor. Mg(2+) is bound by residues aspartate 12 and glycine 39. IMP-binding positions include 12 to 15, 37 to 40, threonine 128, arginine 142, glutamine 223, threonine 238, and arginine 302; these read DEGK and NAGH. Residue histidine 40 is the Proton donor of the active site. Residue 298–304 participates in substrate binding; sequence SVTGRPR. GTP-binding positions include arginine 304, 330–332, and 412–414; these read KLD and STG.

It belongs to the adenylosuccinate synthetase family. As to quaternary structure, homodimer. It depends on Mg(2+) as a cofactor.

The protein resides in the cytoplasm. The enzyme catalyses IMP + L-aspartate + GTP = N(6)-(1,2-dicarboxyethyl)-AMP + GDP + phosphate + 2 H(+). It functions in the pathway purine metabolism; AMP biosynthesis via de novo pathway; AMP from IMP: step 1/2. Plays an important role in the de novo pathway of purine nucleotide biosynthesis. Catalyzes the first committed step in the biosynthesis of AMP from IMP. The chain is Adenylosuccinate synthetase from Coxiella burnetii (strain CbuK_Q154) (Coxiella burnetii (strain Q154)).